Here is a 442-residue protein sequence, read N- to C-terminus: 3-isopropylmalate dehydratase large subunit (442 aa).

[4Fe-4S] cluster is bound by residues cysteine 347, cysteine 407, and cysteine 410.

It belongs to the aconitase/IPM isomerase family. LeuC type 1 subfamily. As to quaternary structure, heterodimer of LeuC and LeuD. Requires [4Fe-4S] cluster as cofactor.

It catalyses the reaction (2R,3S)-3-isopropylmalate = (2S)-2-isopropylmalate. Its pathway is amino-acid biosynthesis; L-leucine biosynthesis; L-leucine from 3-methyl-2-oxobutanoate: step 2/4. Functionally, catalyzes the isomerization between 2-isopropylmalate and 3-isopropylmalate, via the formation of 2-isopropylmaleate. The protein is 3-isopropylmalate dehydratase large subunit of Buchnera aphidicola subsp. Uroleucon helianthicola.